The sequence spans 256 residues: Leucyl/phenylalanyl-tRNA--protein transferase (256 aa).

Residues 1-21 (MIPWLPDDSDSAPFPPTRLAL) form a disordered region.

It belongs to the L/F-transferase family.

Its subcellular location is the cytoplasm. It carries out the reaction N-terminal L-lysyl-[protein] + L-leucyl-tRNA(Leu) = N-terminal L-leucyl-L-lysyl-[protein] + tRNA(Leu) + H(+). The catalysed reaction is N-terminal L-arginyl-[protein] + L-leucyl-tRNA(Leu) = N-terminal L-leucyl-L-arginyl-[protein] + tRNA(Leu) + H(+). The enzyme catalyses L-phenylalanyl-tRNA(Phe) + an N-terminal L-alpha-aminoacyl-[protein] = an N-terminal L-phenylalanyl-L-alpha-aminoacyl-[protein] + tRNA(Phe). Functionally, functions in the N-end rule pathway of protein degradation where it conjugates Leu, Phe and, less efficiently, Met from aminoacyl-tRNAs to the N-termini of proteins containing an N-terminal arginine or lysine. The sequence is that of Leucyl/phenylalanyl-tRNA--protein transferase from Leptothrix cholodnii (strain ATCC 51168 / LMG 8142 / SP-6) (Leptothrix discophora (strain SP-6)).